The following is a 349-amino-acid chain: Protein BCCIP homolog (349 aa).

The span at 1–10 shows a compositional bias: basic residues; it reads MGRVFKKKGG. The tract at residues 1 to 65 is disordered; it reads MGRVFKKKGG…DDEEEDEDEQ (65 aa). Over residues 11-33 the composition is skewed to basic and acidic residues; the sequence is AKREAEEEKQEELVMRKKLRKEE. Residues 34–65 are compositionally biased toward acidic residues; the sequence is EPEPVEDVEEDEDVSDEDDEDIDDEEEDEDEQ.

It belongs to the BCP1 family.

This chain is Protein BCCIP homolog, found in Caenorhabditis elegans.